We begin with the raw amino-acid sequence, 210 residues long: Na(+)-translocating NADH-quinone reductase subunit D (210 aa).

A run of 5 helical transmembrane segments spans residues 42–62 (FVMTLAVTAVTAFSNLFISLI), 72–92 (IIAQMAVIASLVIVVDQVLKA), 103–123 (VFVGLIITNCIVMGRAEAYAM), 131–151 (FLDGIGNGLGYGAVLLTVATV), and 178–198 (NGLLLLPPSAFFIIGLIIWGV).

This sequence belongs to the NqrDE/RnfAE family. In terms of assembly, composed of six subunits; NqrA, NqrB, NqrC, NqrD, NqrE and NqrF.

The protein resides in the cell inner membrane. The catalysed reaction is a ubiquinone + n Na(+)(in) + NADH + H(+) = a ubiquinol + n Na(+)(out) + NAD(+). Its function is as follows. NQR complex catalyzes the reduction of ubiquinone-1 to ubiquinol by two successive reactions, coupled with the transport of Na(+) ions from the cytoplasm to the periplasm. NqrA to NqrE are probably involved in the second step, the conversion of ubisemiquinone to ubiquinol. This Aeromonas salmonicida (strain A449) protein is Na(+)-translocating NADH-quinone reductase subunit D.